The primary structure comprises 70 residues: Large ribosomal subunit protein uL29 (70 aa).

It belongs to the universal ribosomal protein uL29 family.

The protein is Large ribosomal subunit protein uL29 of Symbiobacterium thermophilum (strain DSM 24528 / JCM 14929 / IAM 14863 / T).